The primary structure comprises 860 residues: Probable leucine--tRNA ligase, cytoplasmic (860 aa).

Residues 41–51 (PYMNGKLHLGH) carry the 'HIGH' region motif. Residues 552–556 (KMSKS) carry the 'KMSKS' region motif. ATP is bound at residue lysine 555.

This sequence belongs to the class-I aminoacyl-tRNA synthetase family.

Its subcellular location is the cytoplasm. It catalyses the reaction tRNA(Leu) + L-leucine + ATP = L-leucyl-tRNA(Leu) + AMP + diphosphate. In Enterocytozoon bieneusi (strain H348) (Microsporidian parasite), this protein is Probable leucine--tRNA ligase, cytoplasmic.